The following is a 75-amino-acid chain: Exodeoxyribonuclease 7 small subunit (75 aa).

The protein belongs to the XseB family. In terms of assembly, heterooligomer composed of large and small subunits.

It localises to the cytoplasm. The enzyme catalyses Exonucleolytic cleavage in either 5'- to 3'- or 3'- to 5'-direction to yield nucleoside 5'-phosphates.. Bidirectionally degrades single-stranded DNA into large acid-insoluble oligonucleotides, which are then degraded further into small acid-soluble oligonucleotides. In Geobacter sp. (strain M21), this protein is Exodeoxyribonuclease 7 small subunit.